Reading from the N-terminus, the 887-residue chain is Pyruvate dehydrogenase E1 component (887 aa).

In terms of assembly, homodimer. Part of the PDH complex, consisting of multiple copies of pyruvate dehydrogenase (E1), dihydrolipoamide acetyltransferase (E2) and lipoamide dehydrogenase (E3). Requires thiamine diphosphate as cofactor.

It catalyses the reaction N(6)-[(R)-lipoyl]-L-lysyl-[protein] + pyruvate + H(+) = N(6)-[(R)-S(8)-acetyldihydrolipoyl]-L-lysyl-[protein] + CO2. Its function is as follows. Component of the pyruvate dehydrogenase (PDH) complex, that catalyzes the overall conversion of pyruvate to acetyl-CoA and CO(2). In Buchnera aphidicola subsp. Baizongia pistaciae (strain Bp), this protein is Pyruvate dehydrogenase E1 component (aceE).